The chain runs to 426 residues: Serine--tRNA ligase (426 aa).

235–237 (TAE) contributes to the L-serine binding site. 266 to 268 (RRE) contributes to the ATP binding site. Residue Glu289 coordinates L-serine. ATP is bound at residue 353–356 (EISS). Ser389 lines the L-serine pocket.

The protein belongs to the class-II aminoacyl-tRNA synthetase family. Type-1 seryl-tRNA synthetase subfamily. As to quaternary structure, homodimer. The tRNA molecule binds across the dimer.

The protein localises to the cytoplasm. The enzyme catalyses tRNA(Ser) + L-serine + ATP = L-seryl-tRNA(Ser) + AMP + diphosphate + H(+). It carries out the reaction tRNA(Sec) + L-serine + ATP = L-seryl-tRNA(Sec) + AMP + diphosphate + H(+). It functions in the pathway aminoacyl-tRNA biosynthesis; selenocysteinyl-tRNA(Sec) biosynthesis; L-seryl-tRNA(Sec) from L-serine and tRNA(Sec): step 1/1. In terms of biological role, catalyzes the attachment of serine to tRNA(Ser). Is also able to aminoacylate tRNA(Sec) with serine, to form the misacylated tRNA L-seryl-tRNA(Sec), which will be further converted into selenocysteinyl-tRNA(Sec). The polypeptide is Serine--tRNA ligase (Trichormus variabilis (strain ATCC 29413 / PCC 7937) (Anabaena variabilis)).